The chain runs to 117 residues: Cliotide T9 (117 aa).

An N-terminal signal peptide occupies residues 1–25 (MAYVRLACLAVIFFFAASVMFTVEA). The segment at residues 26 to 55 (GIPCGESCVFIPCLTTVVGCSCKNKVCYNN) is a cross-link (cyclopeptide (Gly-Asn)). 3 cysteine pairs are disulfide-bonded: Cys-29–Cys-45, Cys-33–Cys-47, and Cys-38–Cys-52. A propeptide spans 56-117 (HVIAAEANSI…YLLKDFLKMP (62 aa)) (removed in mature form).

Contains 3 disulfide bonds. Post-translationally, this is a cyclic peptide. Expressed in seed but not in root, nodule, flower, stem, shoot, leaf and pod (at protein level).

Probably participates in a plant defense mechanism. The protein is Cliotide T9 of Clitoria ternatea (Butterfly pea).